Consider the following 158-residue polypeptide: Small ribosomal subunit protein uS7 (158 aa).

This sequence belongs to the universal ribosomal protein uS7 family. Part of the 30S ribosomal subunit. Contacts proteins S9 and S11.

In terms of biological role, one of the primary rRNA binding proteins, it binds directly to 16S rRNA where it nucleates assembly of the head domain of the 30S subunit. Is located at the subunit interface close to the decoding center, probably blocks exit of the E-site tRNA. This chain is Small ribosomal subunit protein uS7, found in Christiangramia forsetii (strain DSM 17595 / CGMCC 1.15422 / KT0803) (Gramella forsetii).